Reading from the N-terminus, the 78-residue chain is Large ribosomal subunit protein bL28 (78 aa).

Residues 1 to 24 (MSQVCQVTGKRPVTGNNVSHSQRK) form a disordered region.

This sequence belongs to the bacterial ribosomal protein bL28 family.

The polypeptide is Large ribosomal subunit protein bL28 (Chromohalobacter salexigens (strain ATCC BAA-138 / DSM 3043 / CIP 106854 / NCIMB 13768 / 1H11)).